The sequence spans 518 residues: ATPase expression protein 2, mitochondrial (518 aa).

The transit peptide at 1–15 (MLKKSRVLGKIPIPY) directs the protein to the mitochondrion.

This sequence belongs to the AEP2 family. Binds to the 5'UTR of the OLI1 mRNA.

The protein resides in the mitochondrion. In terms of biological role, required for translation of the mitochondrial OLI1 transcript coding for the mitochondrial ATP synthase subunit 9. The protein is ATPase expression protein 2, mitochondrial (AEP2) of Kluyveromyces lactis (strain ATCC 8585 / CBS 2359 / DSM 70799 / NBRC 1267 / NRRL Y-1140 / WM37) (Yeast).